We begin with the raw amino-acid sequence, 281 residues long: Probable endonuclease 4 (281 aa).

Zn(2+) is bound by residues His-69, His-109, Glu-145, Asp-179, His-182, His-216, Asp-229, His-231, and Glu-261.

This sequence belongs to the AP endonuclease 2 family. Requires Zn(2+) as cofactor.

It catalyses the reaction Endonucleolytic cleavage to 5'-phosphooligonucleotide end-products.. In terms of biological role, endonuclease IV plays a role in DNA repair. It cleaves phosphodiester bonds at apurinic or apyrimidinic (AP) sites, generating a 3'-hydroxyl group and a 5'-terminal sugar phosphate. The chain is Probable endonuclease 4 from Pectobacterium atrosepticum (strain SCRI 1043 / ATCC BAA-672) (Erwinia carotovora subsp. atroseptica).